We begin with the raw amino-acid sequence, 325 residues long: Serpentine receptor class delta-59 (325 aa).

A run of 8 helical transmembrane segments spans residues 14 to 34, 45 to 65, 75 to 95, 97 to 117, 132 to 152, 190 to 210, 235 to 255, and 275 to 295; these read WYWP…LHLI, LKIF…FAFL, ISAA…TCFI, YHVF…TVLF, TYIM…IPFT, FLSA…GCLI, TLIH…IPSF, and ILVS…YFIV.

The protein belongs to the nematode receptor-like protein srd family.

It is found in the membrane. In Caenorhabditis elegans, this protein is Serpentine receptor class delta-59 (srd-59).